Reading from the N-terminus, the 393-residue chain is Prokineticin receptor 1 (393 aa).

The Extracellular segment spans residues 1-62 (METTMGFMDD…TNSRTFFAAK (62 aa)). N-linked (GlcNAc...) asparagine glycosylation is found at Asn-11, Asn-14, and Asn-36. Residues 63–83 (IVIGMALVGIMLVCGIGNFIF) form a helical membrane-spanning segment. At 84 to 98 (IAALVRYKKLRNLTN) the chain is on the cytoplasmic side. A helical membrane pass occupies residues 99 to 119 (LLIANLAISDFLVAIVCCPFE). Topologically, residues 120–146 (MDYYVVRQLSWEHGHVLCTSVNYLRTV) are extracellular. A disulfide bridge links Cys-137 with Cys-217. Residues 147-167 (SLYVSTNALLAIAIDRYLAIV) form a helical membrane-spanning segment. Over 168–180 (HPLRPRMKCQTAT) the chain is Cytoplasmic. The helical transmembrane segment at 181-201 (GLIALVWTVSILIAIPSAYFT) threads the bilayer. The Extracellular segment spans residues 202 to 232 (TETVLVIVKSQEKIFCGQIWPVDQQLYYKSY). Residues 233–253 (FLFIFGIEFVGPVVTMTLCYA) traverse the membrane as a helical segment. Residues 254–282 (RISRELWFKAVPGFQTEQIRKRLRCRRKT) are Cytoplasmic-facing. A helical transmembrane segment spans residues 283-303 (VLVLMCILTAYVLCWAPFYGF). Residues 304 to 322 (TIVRDFFPTVFVKEKHYLT) lie on the Extracellular side of the membrane. The helical transmembrane segment at 323-343 (AFYIVECIAMSNSMINTLCFV) threads the bilayer. The Cytoplasmic portion of the chain corresponds to 344–393 (TVKNDTVKYFKKIMLLHWKASYNGGKSSADLDLKTIGMPATEEVDCIRLK).

Belongs to the G-protein coupled receptor 1 family. In terms of tissue distribution, localizes to glandular epithelium, stroma and vascular endothelial cells of first trimester decidua (at protein level). Up-regulated in first trimester decidua when compared with non-pregnant endometrium. Expressed in the stomach, throughout the small intestine, colon, rectum, thyroid gland, pituitary gland, salivary gland, adrenal gland, testis, ovary, brain, spleen, prostate and pancreas.

The protein resides in the cell membrane. Its function is as follows. Receptor for prokineticin 1. Exclusively coupled to the G(q) subclass of heteromeric G proteins. Activation leads to mobilization of calcium, stimulation of phosphoinositide turnover and activation of p44/p42 mitogen-activated protein kinase. May play a role during early pregnancy. This Homo sapiens (Human) protein is Prokineticin receptor 1 (PROKR1).